A 295-amino-acid polypeptide reads, in one-letter code: N-acetylmuramic acid 6-phosphate etherase (295 aa).

Residues 54–217 (VIASFRQGGR…STASMIGIGK (164 aa)) enclose the SIS domain. Glu-82 serves as the catalytic Proton donor. Glu-113 is a catalytic residue.

This sequence belongs to the GCKR-like family. MurNAc-6-P etherase subfamily. As to quaternary structure, homodimer.

The catalysed reaction is N-acetyl-D-muramate 6-phosphate + H2O = N-acetyl-D-glucosamine 6-phosphate + (R)-lactate. It participates in amino-sugar metabolism; N-acetylmuramate degradation. In terms of biological role, specifically catalyzes the cleavage of the D-lactyl ether substituent of MurNAc 6-phosphate, producing GlcNAc 6-phosphate and D-lactate. The sequence is that of N-acetylmuramic acid 6-phosphate etherase from Geobacillus sp. (strain WCH70).